The chain runs to 119 residues: Protein RALF-like 22 (119 aa).

An N-terminal signal peptide occupies residues 1–23; it reads MTNTRAIYAVIAILAIVISAVES. Positions 24 to 70 are cleaved as a propeptide — removed in mature form; the sequence is TGDFGDSLDFVRAGSSSLFSGCTGSIAECIAEEEEMEFDSDISRRIL. Disulfide bonds link cysteine 88–cysteine 98 and cysteine 111–cysteine 117.

It belongs to the plant rapid alkalinization factor (RALF) family. In terms of processing, proteolytically cleaved, probably by S1P, a subtilisin-like serine protease (subtilase).

The protein resides in the secreted. Its function is as follows. Cell signaling peptide that may regulate plant stress, growth, and development. Mediates a rapid alkalinization of extracellular space by mediating a transient increase in the cytoplasmic Ca(2+) concentration leading to a calcium-dependent signaling events through a cell surface receptor and a concomitant activation of some intracellular mitogen-activated protein kinases. This Arabidopsis thaliana (Mouse-ear cress) protein is Protein RALF-like 22 (RALFL22).